A 152-amino-acid polypeptide reads, in one-letter code: 3-hydroxyacyl-[acyl-carrier-protein] dehydratase FabZ (152 aa).

Residue histidine 54 is part of the active site.

Belongs to the thioester dehydratase family. FabZ subfamily.

The protein localises to the cytoplasm. The enzyme catalyses a (3R)-hydroxyacyl-[ACP] = a (2E)-enoyl-[ACP] + H2O. In terms of biological role, involved in unsaturated fatty acids biosynthesis. Catalyzes the dehydration of short chain beta-hydroxyacyl-ACPs and long chain saturated and unsaturated beta-hydroxyacyl-ACPs. The chain is 3-hydroxyacyl-[acyl-carrier-protein] dehydratase FabZ from Shewanella woodyi (strain ATCC 51908 / MS32).